The sequence spans 406 residues: Elongation factor Tu-A (406 aa).

The tr-type G domain occupies 10-215 (KPHVNVGTIG…AIDEYIPTPV (206 aa)). The segment at 19–26 (GHVDHGKT) is G1. Residue 19 to 26 (GHVDHGKT) participates in GTP binding. Thr26 is a binding site for Mg(2+). The segment at 61–65 (GITIN) is G2. Residues 82 to 85 (DCPG) are G3. Residues 82–86 (DCPGH) and 137–140 (NKVD) contribute to the GTP site. Residues 137-140 (NKVD) form a G4 region. Residues 175–177 (SAL) are G5. Thr395 carries the phosphothreonine modification.

This sequence belongs to the TRAFAC class translation factor GTPase superfamily. Classic translation factor GTPase family. EF-Tu/EF-1A subfamily. As to quaternary structure, monomer. Binds to the 70S ribosome, contacts tmRNA during trans-translation. Phosphorylated on a threonine.

It is found in the cytoplasm. It catalyses the reaction GTP + H2O = GDP + phosphate + H(+). In terms of biological role, GTP hydrolase that promotes the GTP-dependent binding of aminoacyl-tRNA to the A-site of ribosomes during protein biosynthesis. EF-Tu-GDP binds to the acceptor arm of tmRNA by interacting with its acceptor arm, suggesting that GTP hydrolysis by EF-Tu is essential for tmRNA function. Its function is as follows. Protects glycyl-tRNA(Gly) from hydrolysis by E.coli D-aminoacyl-tRNA deacylase (dtd). The chain is Elongation factor Tu-A from Thermus thermophilus (strain ATCC 27634 / DSM 579 / HB8).